Here is a 56-residue protein sequence, read N- to C-terminus: uncharacterized protein (56 aa).

This is an uncharacterized protein from Autographa californica nuclear polyhedrosis virus (AcMNPV).